The following is a 120-amino-acid chain: Large ribosomal subunit protein uL22 (120 aa).

Belongs to the universal ribosomal protein uL22 family. Part of the 50S ribosomal subunit.

In terms of biological role, this protein binds specifically to 23S rRNA; its binding is stimulated by other ribosomal proteins, e.g. L4, L17, and L20. It is important during the early stages of 50S assembly. It makes multiple contacts with different domains of the 23S rRNA in the assembled 50S subunit and ribosome. Its function is as follows. The globular domain of the protein is located near the polypeptide exit tunnel on the outside of the subunit, while an extended beta-hairpin is found that lines the wall of the exit tunnel in the center of the 70S ribosome. In Corynebacterium aurimucosum (strain ATCC 700975 / DSM 44827 / CIP 107346 / CN-1) (Corynebacterium nigricans), this protein is Large ribosomal subunit protein uL22.